The chain runs to 302 residues: Oxygen-dependent coproporphyrinogen-III oxidase (302 aa).

Residue serine 94 coordinates substrate. Positions 98 and 108 each coordinate a divalent metal cation. The Proton donor role is filled by histidine 108. 110 to 112 lines the substrate pocket; that stretch reads NVR. A divalent metal cation is bound by residues histidine 147 and histidine 177. Positions 242–277 are important for dimerization; the sequence is YVEFNLVWDRGTLFGLQTGGRTESILMSMPPLVRWE. 260 to 262 is a binding site for substrate; the sequence is GGR.

It belongs to the aerobic coproporphyrinogen-III oxidase family. As to quaternary structure, homodimer. A divalent metal cation serves as cofactor.

The protein resides in the cytoplasm. It catalyses the reaction coproporphyrinogen III + O2 + 2 H(+) = protoporphyrinogen IX + 2 CO2 + 2 H2O. Its pathway is porphyrin-containing compound metabolism; protoporphyrin-IX biosynthesis; protoporphyrinogen-IX from coproporphyrinogen-III (O2 route): step 1/1. Its function is as follows. Involved in the heme biosynthesis. Catalyzes the aerobic oxidative decarboxylation of propionate groups of rings A and B of coproporphyrinogen-III to yield the vinyl groups in protoporphyrinogen-IX. The chain is Oxygen-dependent coproporphyrinogen-III oxidase from Erwinia tasmaniensis (strain DSM 17950 / CFBP 7177 / CIP 109463 / NCPPB 4357 / Et1/99).